The chain runs to 100 residues: Large ribosomal subunit protein uL23 (100 aa).

The protein belongs to the universal ribosomal protein uL23 family. Part of the 50S ribosomal subunit. Contacts protein L29, and trigger factor when it is bound to the ribosome.

Functionally, one of the early assembly proteins it binds 23S rRNA. One of the proteins that surrounds the polypeptide exit tunnel on the outside of the ribosome. Forms the main docking site for trigger factor binding to the ribosome. This chain is Large ribosomal subunit protein uL23, found in Vibrio atlanticus (strain LGP32) (Vibrio splendidus (strain Mel32)).